Consider the following 188-residue polypeptide: MYPLFETLCIENGKIQNINLHQVRYERSLREYYGKSAVKIFNLFSLIQLPTPLQNQLIRCRIDYNAETTQIQYFEYQRKIYRTFQPVICDDIEYSLKYSDRSLINTLFAQRGACDEIMIIKNGKVTDCSIGNLIFRQGKKWYTPDTPLLLGTQREKLLQEGKIQERTIFQEDIVNFDEIKIINAMNGL.

This is an uncharacterized protein from Haemophilus influenzae (strain ATCC 51907 / DSM 11121 / KW20 / Rd).